We begin with the raw amino-acid sequence, 211 residues long: Thiamine-phosphate synthase (211 aa).

4-amino-2-methyl-5-(diphosphooxymethyl)pyrimidine-binding positions include 37 to 41 and asparagine 69; that span reads QLRIK. Aspartate 70 and aspartate 89 together coordinate Mg(2+). Serine 108 serves as a coordination point for 4-amino-2-methyl-5-(diphosphooxymethyl)pyrimidine. Residue 134 to 136 coordinates 2-[(2R,5Z)-2-carboxy-4-methylthiazol-5(2H)-ylidene]ethyl phosphate; the sequence is TQT. Position 137 (lysine 137) interacts with 4-amino-2-methyl-5-(diphosphooxymethyl)pyrimidine. 2-[(2R,5Z)-2-carboxy-4-methylthiazol-5(2H)-ylidene]ethyl phosphate contacts are provided by residues glycine 166 and 186-187; that span reads VS.

Belongs to the thiamine-phosphate synthase family. Mg(2+) is required as a cofactor.

It carries out the reaction 2-[(2R,5Z)-2-carboxy-4-methylthiazol-5(2H)-ylidene]ethyl phosphate + 4-amino-2-methyl-5-(diphosphooxymethyl)pyrimidine + 2 H(+) = thiamine phosphate + CO2 + diphosphate. The enzyme catalyses 2-(2-carboxy-4-methylthiazol-5-yl)ethyl phosphate + 4-amino-2-methyl-5-(diphosphooxymethyl)pyrimidine + 2 H(+) = thiamine phosphate + CO2 + diphosphate. It catalyses the reaction 4-methyl-5-(2-phosphooxyethyl)-thiazole + 4-amino-2-methyl-5-(diphosphooxymethyl)pyrimidine + H(+) = thiamine phosphate + diphosphate. It functions in the pathway cofactor biosynthesis; thiamine diphosphate biosynthesis; thiamine phosphate from 4-amino-2-methyl-5-diphosphomethylpyrimidine and 4-methyl-5-(2-phosphoethyl)-thiazole: step 1/1. In terms of biological role, condenses 4-methyl-5-(beta-hydroxyethyl)thiazole monophosphate (THZ-P) and 2-methyl-4-amino-5-hydroxymethyl pyrimidine pyrophosphate (HMP-PP) to form thiamine monophosphate (TMP). The sequence is that of Thiamine-phosphate synthase from Escherichia coli O9:H4 (strain HS).